The sequence spans 553 residues: Putative transport protein KPN78578_40470 (553 aa).

The next 5 membrane-spanning stretches (helical) occupy residues 4-24, 28-48, 65-85, 95-115, and 158-178; these read IALT…IGNV, GVGF…HFVD, FGLI…FFAS, LFAI…HKLF, and MSYA…MWLV. 2 RCK C-terminal domains span residues 192 to 276 and 279 to 361; these read RFEE…VIGQ and ATSL…ELGN. 6 helical membrane-spanning segments follow: residues 371–391, 403–425, 437–457, 464–484, 493–513, and 532–552; these read MLPV…PLFI, AGGP…LYWF, LGIV…FVAT, LSWI…VGVL, YLTL…LAFA, and PLVM…FWGL.

Belongs to the AAE transporter (TC 2.A.81) family. YidE subfamily.

It localises to the cell membrane. The protein is Putative transport protein KPN78578_40470 of Klebsiella pneumoniae subsp. pneumoniae (strain ATCC 700721 / MGH 78578).